The chain runs to 204 residues: bMERB domain-containing protein 1 (204 aa).

The region spanning 3–150 is the bMERB domain; it reads LKQSLSTHLE…EQEEDKEMAD (148 aa). The interval 162–187 is disordered; sequence VTKSPASSRAEKKAEPPPSKPTVAKT.

The sequence is that of bMERB domain-containing protein 1 from Homo sapiens (Human).